A 247-amino-acid polypeptide reads, in one-letter code: C-type lectin domain family 7 member A (247 aa).

The Cytoplasmic segment spans residues 1-44 (MEYQSSVENLDEDGYTQLDFSSRNITRRSVVSEKGLCAASSHWR). Residues 15–18 (YTQL) carry the ITAM-like motif. The helical; Signal-anchor for type II membrane protein transmembrane segment at 45–65 (LIAVTLGILCSVMLVITVVLS) threads the bilayer. Over 66–247 (TSGIWRSSSG…YSICEKKLSV (182 aa)) the chain is Extracellular. Residues 81–101 (SDSFPSRNKDNQSQPTQSSLE) show a composition bias toward polar residues. The interval 81–103 (SDSFPSRNKDNQSQPTQSSLEDS) is disordered. Asn-91 is a glycosylation site (N-linked (GlcNAc...) asparagine). 3 disulfide bridges follow: Cys-120-Cys-131, Cys-148-Cys-241, and Cys-220-Cys-233. The C-type lectin domain occupies 127–242 (HEDSCYLFST…CSVHSYSICE (116 aa)). 146–153 (RQCFQLGS) provides a ligand contact to (1,3-beta-D-glucosyl)n. A divalent metal cation contacts are provided by Lys-157, Asp-159, and Glu-163. Glu-195 is a (1,3-beta-D-glucosyl)n binding site. Glu-242 contributes to the a divalent metal cation binding site.

In terms of assembly, homodimer. Interacts with SYK; participates in leukocyte activation in presence of fungal pathogens. Interacts with CD37; this interaction controls CLEC7A-mediated IL-6 production. Phosphorylated on tyrosine residues in response to beta-glucan binding. As to expression, detected in bone marrow, monocytes, macrophages, dendritic cells and natural killer cells.

Its subcellular location is the cell membrane. Its function is as follows. Lectin that functions as a pattern recognizing receptor (PRR) specific for beta-1,3-linked and beta-1,6-linked glucans, which constitute cell wall constituents from pathogenic bacteria and fungi. Necessary for the TLR2-mediated inflammatory response and activation of NF-kappa-B: upon beta-glucan binding, recruits SYK via its ITAM motif and promotes a signaling cascade that activates some CARD domain-BCL10-MALT1 (CBM) signalosomes, leading to the activation of NF-kappa-B and MAP kinase p38 (MAPK11, MAPK12, MAPK13 and/or MAPK14) pathways which stimulate expression of genes encoding pro-inflammatory cytokines and chemokines. Enhances cytokine production in macrophages and dendritic cells. Mediates production of reactive oxygen species in the cell. Mediates phagocytosis of C.albicans conidia. Binds T-cells in a way that does not involve their surface glycans and plays a role in T-cell activation. Stimulates T-cell proliferation. Induces phosphorylation of SCIMP after binding beta-glucans. This is C-type lectin domain family 7 member A (CLEC7A) from Bos taurus (Bovine).